Consider the following 158-residue polypeptide: Transcription factor BTF3 homolog 4 (158 aa).

One can recognise an NAC-A/B domain in the interval 33-98 (TADDKKLQSS…AEAKPITEML (66 aa)). Residues 124–158 (VLDSKAPKSEDIDEEDDDVPDLAENFDEASKNEAN) are disordered. A compositionally biased stretch (acidic residues) spans 134–150 (DIDEEDDDVPDLAENFD).

It belongs to the NAC-beta family.

This is Transcription factor BTF3 homolog 4 (BTF3L4) from Gallus gallus (Chicken).